The sequence spans 342 residues: Ferredoxin--NADP reductase (342 aa).

Residues Cys-17, Asp-36, Gln-44, Tyr-49, Ile-89, Phe-124, Asp-289, and Thr-330 each contribute to the FAD site.

Belongs to the ferredoxin--NADP reductase type 2 family. As to quaternary structure, homodimer. The cofactor is FAD.

The enzyme catalyses 2 reduced [2Fe-2S]-[ferredoxin] + NADP(+) + H(+) = 2 oxidized [2Fe-2S]-[ferredoxin] + NADPH. This chain is Ferredoxin--NADP reductase, found in Rhodopseudomonas palustris (strain BisB18).